The sequence spans 432 residues: Selenocysteine lyase (432 aa).

Met1 is subject to N-acetylmethionine. Residues 1–20 (MDVARNGARGSVESPPNRKV) are disordered. Ser117 is modified (phosphoserine). At Lys247 the chain carries N6-(pyridoxal phosphate)lysine. Catalysis depends on Cys375, which acts as the S-selanylcysteine intermediate.

Belongs to the class-V pyridoxal-phosphate-dependent aminotransferase family. In terms of assembly, homodimer. Pyridoxal 5'-phosphate serves as cofactor.

The protein resides in the cytoplasm. The protein localises to the cytosol. It catalyses the reaction L-selenocysteine + AH2 = hydrogenselenide + L-alanine + A + H(+). Functionally, catalyzes the decomposition of L-selenocysteine to L-alanine and elemental selenium. The polypeptide is Selenocysteine lyase (Scly) (Rattus norvegicus (Rat)).